A 340-amino-acid chain; its full sequence is NAD-dependent epimerase/dehydratase terH (340 aa).

Residues 7–27 (IVPPGGLVLVTGVTGFIGSYI) form a helical membrane-spanning segment. Asparagine 139 carries N-linked (GlcNAc...) asparagine glycosylation. An NADP(+)-binding site is contributed by tyrosine 176.

Belongs to the NAD(P)-dependent epimerase/dehydratase family. Dihydroflavonol-4-reductase subfamily.

The protein localises to the membrane. Functionally, NAD-dependent epimerase/dehydratase; part of the gene cluster that mediates the biosynthesis of terrein, a fungal metabolite with ecological, antimicrobial, antiproliferative, and antioxidative activities. The first step in the pathway is performed by the polyketide synthase terA that produces 4-hydroxy-6-methylpyranon (4-HMP), orsellinic acid (OA), and 2,3-dehydro-6-hydroxymellein (2,3-dehydro-6-HM) by condensing acetyl-CoA with two, three, or four malonyl-CoA units, respectively. 4-HMP and OA are not pathway intermediates, but are rather shunt or side products. 2,3-dehydro-6-HM is further converted to 6-hydroxymellein (6-HM) by the 6-hydroxymellein synthase terB. The monooxygenases terC and terD, the multicopper oxidase terE and the Kelch-like protein terF are then involved in the transformation of 6-HM to terrein. Even if they are co-regulated with the other terrein cluster genes, terH and terI seem to be dispensable for terrein production; whereas one or both of the 2 transporters terG and terJ are probably required for efficient secretion of metabolites. The polypeptide is NAD-dependent epimerase/dehydratase terH (Aspergillus terreus (strain NIH 2624 / FGSC A1156)).